Consider the following 160-residue polypeptide: Competence protein ComGD (160 aa).

Residues 30–50 (AFTMLESLLVLGLVSILALGL) form a helical membrane-spanning segment.

As to quaternary structure, the transformation pili are flexible filaments, consisting mainly of the major pilin ComGC and smaller amounts of the minor pilins, including at least ComGD, ComGF and ComGG, and perhaps ComGE. Interacts with ComGE. Interacts with ComGF. Interacts with ComGG.

It localises to the cell membrane. It is found in the cell surface. The protein localises to the fimbrium. Required for formation of the type IV-like pilus (T4P) that plays a role in transformation. Transformation pili are dynamically extended and retracted, perhaps thereby promoting DNA uptake and transformation. Involved in transformation. Required for DNA binding. In Streptococcus pneumoniae (strain ATCC BAA-255 / R6), this protein is Competence protein ComGD.